The following is a 375-amino-acid chain: UPF0612 protein C569.003 (375 aa).

This sequence belongs to the UPF0612 family.

The protein resides in the cytoplasm. This Schizosaccharomyces pombe (strain 972 / ATCC 24843) (Fission yeast) protein is UPF0612 protein C569.003.